We begin with the raw amino-acid sequence, 167 residues long: Ribosome maturation factor RimP (167 aa).

Belongs to the RimP family.

The protein resides in the cytoplasm. In terms of biological role, required for maturation of 30S ribosomal subunits. This is Ribosome maturation factor RimP from Cytophaga hutchinsonii (strain ATCC 33406 / DSM 1761 / CIP 103989 / NBRC 15051 / NCIMB 9469 / D465).